Here is a 236-residue protein sequence, read N- to C-terminus: Uridylate kinase (236 aa).

Residue 10-13 (KLSG) coordinates ATP. UMP is bound at residue Gly52. ATP-binding residues include Gly53 and Arg57. UMP-binding positions include Asp72 and 133–140 (TGNPFFTT). ATP contacts are provided by Thr160, Tyr166, and Asp169.

It belongs to the UMP kinase family. Homohexamer.

Its subcellular location is the cytoplasm. It catalyses the reaction UMP + ATP = UDP + ADP. It functions in the pathway pyrimidine metabolism; CTP biosynthesis via de novo pathway; UDP from UMP (UMPK route): step 1/1. Inhibited by UTP. Its function is as follows. Catalyzes the reversible phosphorylation of UMP to UDP. In Cupriavidus metallidurans (strain ATCC 43123 / DSM 2839 / NBRC 102507 / CH34) (Ralstonia metallidurans), this protein is Uridylate kinase.